A 400-amino-acid chain; its full sequence is Tryptophan synthase beta chain (400 aa).

Residue lysine 91 is modified to N6-(pyridoxal phosphate)lysine.

This sequence belongs to the TrpB family. Tetramer of two alpha and two beta chains. It depends on pyridoxal 5'-phosphate as a cofactor.

The enzyme catalyses (1S,2R)-1-C-(indol-3-yl)glycerol 3-phosphate + L-serine = D-glyceraldehyde 3-phosphate + L-tryptophan + H2O. The protein operates within amino-acid biosynthesis; L-tryptophan biosynthesis; L-tryptophan from chorismate: step 5/5. The beta subunit is responsible for the synthesis of L-tryptophan from indole and L-serine. The polypeptide is Tryptophan synthase beta chain (Listeria monocytogenes serovar 1/2a (strain ATCC BAA-679 / EGD-e)).